A 188-amino-acid polypeptide reads, in one-letter code: UPF0301 protein XC_1365 (188 aa).

The protein belongs to the UPF0301 (AlgH) family.

The chain is UPF0301 protein XC_1365 from Xanthomonas campestris pv. campestris (strain 8004).